The chain runs to 285 residues: Pantothenate synthetase (285 aa).

An ATP-binding site is contributed by 30-37 (MGNLHDGH). The active-site Proton donor is the His37. Position 61 (Gln61) interacts with (R)-pantoate. Gln61 serves as a coordination point for beta-alanine. An ATP-binding site is contributed by 149–152 (GEKD). Gln155 serves as a coordination point for (R)-pantoate. ATP-binding positions include Ile178 and 186–189 (LSSR).

Belongs to the pantothenate synthetase family. In terms of assembly, homodimer.

The protein resides in the cytoplasm. It carries out the reaction (R)-pantoate + beta-alanine + ATP = (R)-pantothenate + AMP + diphosphate + H(+). It functions in the pathway cofactor biosynthesis; (R)-pantothenate biosynthesis; (R)-pantothenate from (R)-pantoate and beta-alanine: step 1/1. Functionally, catalyzes the condensation of pantoate with beta-alanine in an ATP-dependent reaction via a pantoyl-adenylate intermediate. The polypeptide is Pantothenate synthetase (Buchnera aphidicola subsp. Acyrthosiphon pisum (strain 5A)).